We begin with the raw amino-acid sequence, 202 residues long: MSRYRGPRVKIIRRLGVLPGLTNKIPQLKSSSINQSTSNKKISQYRIRLEEKQKLRFHYGITERQLLNYVRIARKAKGSTGEVLLQLLEMRLDNIIFRLGMAPTIPGARQLVNHRHIGVNDCIVNIPSYRCKPQDFITIKNQQKSEAIISKNIEFYQKFKRPNHLTYSSLEKKGLVNRILDRESTGLKINELLVVEYYSRQA.

Residues 90-153 form the S4 RNA-binding domain; the sequence is MRLDNIIFRL…KSEAIISKNI (64 aa).

It belongs to the universal ribosomal protein uS4 family. In terms of assembly, part of the 30S ribosomal subunit. Contacts protein S5. The interaction surface between S4 and S5 is involved in control of translational fidelity.

It is found in the plastid. The protein resides in the chloroplast. One of the primary rRNA binding proteins, it binds directly to 16S rRNA where it nucleates assembly of the body of the 30S subunit. Functionally, with S5 and S12 plays an important role in translational accuracy. This Hookeria lucens (Moss) protein is Small ribosomal subunit protein uS4c (rps4).